Here is a 172-residue protein sequence, read N- to C-terminus: T-cell receptor gamma chain C region C7.5 (172 aa).

The c region stretch occupies residues 1-140 (DKKLDADISP…QFTITSAYYT (140 aa)). A helical transmembrane segment spans residues 141–160 (YLLLLLKSVIYLAIISFSLL). Residues 161 to 172 (RRTSVCCNEKKS) are Cytoplasmic-facing.

It is found in the membrane. This chain is T-cell receptor gamma chain C region C7.5, found in Mus musculus (Mouse).